A 252-amino-acid chain; its full sequence is Probable transcriptional regulatory protein THA_1246 (252 aa).

Belongs to the TACO1 family.

It localises to the cytoplasm. This is Probable transcriptional regulatory protein THA_1246 from Thermosipho africanus (strain TCF52B).